A 377-amino-acid chain; its full sequence is Cilia- and flagella-associated protein 263 (377 aa).

Coiled-coil stretches lie at residues 95–243 (LTAD…NQEL) and 280–354 (LRKE…SLKG).

Belongs to the CFAP263 family. As to quaternary structure, forms a complex with CFAP184; the interaction is required for functional activity in cilia. Interacts with HAP1 and PCM1.

It is found in the cytoplasm. The protein localises to the cytoskeleton. Its subcellular location is the microtubule organizing center. It localises to the centrosome. The protein resides in the centriolar satellite. It is found in the cell projection. The protein localises to the cilium. Component of centriolar satellites contributing to primary cilium formation. In complex with CFAP263, acts as a regulator of ciliary beating that connects radial spoke 3 (RS3) to the inner dynein arm (IDA) and the nexin-dynein regulatory complex (N-DRC). The complex is positioned parallel to N-DRC and forms a connection between the arch at the base of RS3, the IDA tail and N-DRC. The polypeptide is Cilia- and flagella-associated protein 263 (Homo sapiens (Human)).